A 253-amino-acid polypeptide reads, in one-letter code: Hydroxyacylglutathione hydrolase (253 aa).

7 residues coordinate Zn(2+): histidine 54, histidine 56, aspartate 58, histidine 59, histidine 110, aspartate 127, and histidine 165.

Belongs to the metallo-beta-lactamase superfamily. Glyoxalase II family. As to quaternary structure, monomer. Requires Zn(2+) as cofactor.

It catalyses the reaction an S-(2-hydroxyacyl)glutathione + H2O = a 2-hydroxy carboxylate + glutathione + H(+). It functions in the pathway secondary metabolite metabolism; methylglyoxal degradation; (R)-lactate from methylglyoxal: step 2/2. Thiolesterase that catalyzes the hydrolysis of S-D-lactoyl-glutathione to form glutathione and D-lactic acid. This is Hydroxyacylglutathione hydrolase from Idiomarina loihiensis (strain ATCC BAA-735 / DSM 15497 / L2-TR).